The chain runs to 174 residues: Peptide methionine sulfoxide reductase MsrA (174 aa).

Cys-10 is an active-site residue.

The protein belongs to the MsrA Met sulfoxide reductase family.

It catalyses the reaction L-methionyl-[protein] + [thioredoxin]-disulfide + H2O = L-methionyl-(S)-S-oxide-[protein] + [thioredoxin]-dithiol. The catalysed reaction is [thioredoxin]-disulfide + L-methionine + H2O = L-methionine (S)-S-oxide + [thioredoxin]-dithiol. Its function is as follows. Has an important function as a repair enzyme for proteins that have been inactivated by oxidation. Catalyzes the reversible oxidation-reduction of methionine sulfoxide in proteins to methionine. The protein is Peptide methionine sulfoxide reductase MsrA of Arthrobacter sp. (strain FB24).